A 117-amino-acid chain; its full sequence is Large ribosomal subunit protein uL18 (117 aa).

Belongs to the universal ribosomal protein uL18 family. In terms of assembly, part of the 50S ribosomal subunit; part of the 5S rRNA/L5/L18/L25 subcomplex. Contacts the 5S and 23S rRNAs.

This is one of the proteins that bind and probably mediate the attachment of the 5S RNA into the large ribosomal subunit, where it forms part of the central protuberance. The sequence is that of Large ribosomal subunit protein uL18 from Alkalilimnicola ehrlichii (strain ATCC BAA-1101 / DSM 17681 / MLHE-1).